Here is a 598-residue protein sequence, read N- to C-terminus: MKRTTYAGLINEDYLGQTVTLQGWVQKRRDLGSLIFIDLRDREGIVQLVFSQEFSADALAVADQLRGEYVIEVQGTVVNRNADAVNDRMKTGKVEVEIHDAKILNKAKTPPFYIQDDINVSDELRLKYRYLDLRRPEMQRGLKIRNGITQAVHSYFDANGFYDIETPFLTKSTPEGARDYLVPSRVYQGHFYALPQSPQLFKQLLMGAGFDRYYQIARCFRDEDLRGDRQPEFTQIDMETSFLTAEEIQSYTEGLIKQVMKDVKGVDIKTPFTRMTWQEAMDRFGSEKPDVRFGMELKDMGVAVSNAGFKVFDNALANGGLVKAIAVPGGADQYSRKQIDAYTEYVKRFGAKGLAWMKVTDDGFSGPVAKFFKNDGDFEAITSAAAAKPGDLLLFAADSFKVVSDTLGYLRTAIAKELDLIDQDQYAYLWVVDWPLFEYDEGIERWVPAHHPFTMPNEEDVHYLNDGEDPHKAHAQSYDIILNGYELGGGSIRIHTRELQEKMFKALDFTKERAQEQFGFLLDALDMGFPPHGGLAIGLDRFAMLLSGNDNIREVIAFPKNSKASEPMTNAPSRVSDQQLADLDLNITNPVTDDEPTE.

Glutamate 175 is a binding site for L-aspartate. An aspartate region spans residues glutamine 199–lysine 202. Residue arginine 221 participates in L-aspartate binding. ATP contacts are provided by residues arginine 221–glutamate 223 and glutamine 230. L-aspartate is bound at residue histidine 450. Glutamate 486 is an ATP binding site. Arginine 493 provides a ligand contact to L-aspartate. Residue glycine 538 to arginine 541 participates in ATP binding.

It belongs to the class-II aminoacyl-tRNA synthetase family. Type 1 subfamily. As to quaternary structure, homodimer.

The protein localises to the cytoplasm. It catalyses the reaction tRNA(Asp) + L-aspartate + ATP = L-aspartyl-tRNA(Asp) + AMP + diphosphate. Catalyzes the attachment of L-aspartate to tRNA(Asp) in a two-step reaction: L-aspartate is first activated by ATP to form Asp-AMP and then transferred to the acceptor end of tRNA(Asp). The protein is Aspartate--tRNA ligase of Lactiplantibacillus plantarum (strain ATCC BAA-793 / NCIMB 8826 / WCFS1) (Lactobacillus plantarum).